The primary structure comprises 131 residues: Histone H2B.2 (131 aa).

The span at 1–19 (MSAKAEKKPASKAPAEKKP) shows a compositional bias: basic and acidic residues. Residues 1 to 38 (MSAKAEKKPASKAPAEKKPAAKKTAPSSDGKKRTKARK) form a disordered region. N6-acetyllysine; alternate is present on residues Lys7 and Lys8. Residues Lys7 and Lys8 each participate in a glycyl lysine isopeptide (Lys-Gly) (interchain with G-Cter in SUMO); alternate cross-link. A Phosphoserine modification is found at Ser11. Lys12 is subject to N6-acetyllysine. Lys17 bears the N6-acetyllysine; alternate mark. Residue Lys17 forms a Glycyl lysine isopeptide (Lys-Gly) (interchain with G-Cter in SUMO); alternate linkage. A Glycyl lysine isopeptide (Lys-Gly) (interchain with G-Cter in SUMO) cross-link involves residue Lys18. Residue Lys124 forms a Glycyl lysine isopeptide (Lys-Gly) (interchain with G-Cter in ubiquitin) linkage.

It belongs to the histone H2B family. In terms of assembly, the nucleosome is a histone octamer containing two molecules each of H2A, H2B, H3 and H4 assembled in one H3-H4 heterotetramer and two H2A-H2B heterodimers. The octamer wraps approximately 147 bp of DNA. Post-translationally, monoubiquitinated by the UBC2-BRE1 complex to form H2BK123ub1. H2BK123ub1 gives a specific tag for epigenetic transcriptional activation and is also prerequisite for H3K4me and H3K79me formation. H2BK123ub1 also modulates the formation of double-strand breaks during meiosis and is a prerequisite for DNA-damage checkpoint activation. Phosphorylated by STE20 to form H2BS10ph during progression through meiotic prophase. May be correlated with chromosome condensation. In terms of processing, acetylated by GCN5 to form H2BK11ac and H2BK16ac. H2BK16ac can also be formed by ESA1. Acetylation of N-terminal lysines and particularly formation of H2BK11acK16ac has a positive effect on transcription. Post-translationally, sumoylation to form H2BK6su or H2BK7su, and probably also H2BK16su or H2BK17su, occurs preferentially near the telomeres and represses gene transcription.

Its subcellular location is the nucleus. It localises to the chromosome. Core component of nucleosome. Nucleosomes wrap and compact DNA into chromatin, limiting DNA accessibility to the cellular machineries which require DNA as a template. Histones thereby play a central role in transcription regulation, DNA repair, DNA replication and chromosomal stability. DNA accessibility is regulated via a complex set of post-translational modifications of histones, also called histone code, and nucleosome remodeling. The protein is Histone H2B.2 (HTB2) of Candida glabrata (strain ATCC 2001 / BCRC 20586 / JCM 3761 / NBRC 0622 / NRRL Y-65 / CBS 138) (Yeast).